A 410-amino-acid polypeptide reads, in one-letter code: Argininosuccinate synthase (410 aa).

An ATP-binding site is contributed by 6 to 14 (AYSGGLDTS). Y84 is a binding site for L-citrulline. ATP is bound at residue G114. The L-aspartate site is built by T116, N120, and D121. L-citrulline is bound at residue N120. R124, S169, S178, E254, and Y266 together coordinate L-citrulline.

This sequence belongs to the argininosuccinate synthase family. Type 1 subfamily. As to quaternary structure, homotetramer.

The protein resides in the cytoplasm. The catalysed reaction is L-citrulline + L-aspartate + ATP = 2-(N(omega)-L-arginino)succinate + AMP + diphosphate + H(+). It participates in amino-acid biosynthesis; L-arginine biosynthesis; L-arginine from L-ornithine and carbamoyl phosphate: step 2/3. The protein is Argininosuccinate synthase of Pyrococcus furiosus (strain ATCC 43587 / DSM 3638 / JCM 8422 / Vc1).